A 533-amino-acid polypeptide reads, in one-letter code: uncharacterized protein (533 aa).

Positions 1 to 26 (MKRFFSKLFSKSPTSGRVPSPDSDYS) are disordered. 2 positions are modified to phosphoserine: serine 20 and serine 23. A Phosphotyrosine modification is found at tyrosine 25. Position 26 is a phosphoserine (serine 26). The next 10 helical transmembrane spans lie at 178–198 (ILAV…HILI), 213–230 (YMRV…FEAL), 242–264 (PITY…LVWH), 274–296 (APVA…ICFS), 313–333 (LSPM…EWAA), 353–373 (SILL…AVAS), 394–414 (RVAY…IFCF), 435–455 (IFPI…GGGL), 466–486 (GLIS…FVVV), and 495–515 (IWCG…TVLF).

Belongs to the multi antimicrobial extrusion (MATE) (TC 2.A.66.1) family.

Its subcellular location is the vacuole membrane. This is an uncharacterized protein from Schizosaccharomyces pombe (strain 972 / ATCC 24843) (Fission yeast).